Consider the following 562-residue polypeptide: Dihydroxy-acid dehydratase (562 aa).

Aspartate 80 lines the Mg(2+) pocket. Cysteine 121 is a binding site for [2Fe-2S] cluster. Positions 122 and 123 each coordinate Mg(2+). The residue at position 123 (lysine 123) is an N6-carboxylysine. Residue cysteine 194 participates in [2Fe-2S] cluster binding. Glutamate 446 contacts Mg(2+). Serine 472 (proton acceptor) is an active-site residue.

The protein belongs to the IlvD/Edd family. As to quaternary structure, homodimer. [2Fe-2S] cluster serves as cofactor. It depends on Mg(2+) as a cofactor.

It catalyses the reaction (2R)-2,3-dihydroxy-3-methylbutanoate = 3-methyl-2-oxobutanoate + H2O. The enzyme catalyses (2R,3R)-2,3-dihydroxy-3-methylpentanoate = (S)-3-methyl-2-oxopentanoate + H2O. The protein operates within amino-acid biosynthesis; L-isoleucine biosynthesis; L-isoleucine from 2-oxobutanoate: step 3/4. It participates in amino-acid biosynthesis; L-valine biosynthesis; L-valine from pyruvate: step 3/4. In terms of biological role, functions in the biosynthesis of branched-chain amino acids. Catalyzes the dehydration of (2R,3R)-2,3-dihydroxy-3-methylpentanoate (2,3-dihydroxy-3-methylvalerate) into 2-oxo-3-methylpentanoate (2-oxo-3-methylvalerate) and of (2R)-2,3-dihydroxy-3-methylbutanoate (2,3-dihydroxyisovalerate) into 2-oxo-3-methylbutanoate (2-oxoisovalerate), the penultimate precursor to L-isoleucine and L-valine, respectively. The sequence is that of Dihydroxy-acid dehydratase from Staphylococcus haemolyticus (strain JCSC1435).